A 343-amino-acid chain; its full sequence is Outer envelope pore protein 37, chloroplastic (343 aa).

Polar residues-rich tracts occupy residues 1-11 and 23-43; these read MADPSSQNPNL and THQIQSGTSELSPPSRPPCST. The interval 1 to 43 is disordered; that stretch reads MADPSSQNPNLATPPPPSSPSPTHQIQSGTSELSPPSRPPCST. The transit peptide at 1–73 directs the protein to the chloroplast; it reads MADPSSQNPN…DSLLFLNKVS (73 aa). Residues 74–76 lie on the Cytoplasmic side of the membrane; that stretch reads CKL. A beta stranded membrane pass occupies residues 77-86; it reads FDNLAKLKLS. The Chloroplast intermembrane segment spans residues 87–103; it reads FQNNSQREISQPQVSFT. A beta stranded transmembrane segment spans residues 104–113; the sequence is SKHVSVLYDV. The Cytoplasmic portion of the chain corresponds to 114–129; sequence EEKNTFIKSTLDVHPR. Residues 130-137 traverse the membrane as a beta stranded segment; the sequence is LQLRALHN. Over 138 to 154 the chain is Chloroplast intermembrane; it reads VKAQQGEVAMEANLTEP. A beta stranded transmembrane segment spans residues 155–164; that stretch reads GYSLELSSPV. Over 165 to 169 the chain is Cytoplasmic; it reads PIGYP. Residues 170–178 form a beta stranded membrane-spanning segment; sequence RATLKFPLG. At 179-219 the chain is on the chloroplast intermembrane side; that stretch reads EISLQEKDEEEEEKQKRTLSVNGILKRQVMNGVCTALYTDE. Residues 220 to 228 form a beta stranded membrane-spanning segment; that stretch reads ELRLRYAYK. At 229-230 the chain is on the cytoplasmic side; sequence DD. A beta stranded membrane pass occupies residues 231 to 240; it reads ALSFIPSISL. Residue proline 241 is a topological domain, chloroplast intermembrane. A beta stranded transmembrane segment spans residues 242–250; the sequence is SNAASFAFK. The Cytoplasmic portion of the chain corresponds to 251–257; sequence RRFSPSD. Residues 258–267 form a beta stranded membrane-spanning segment; sequence KLSYWYNFDS. Topologically, residues 268-269 are chloroplast intermembrane; sequence NM. Residues 270–279 form a beta stranded membrane-spanning segment; the sequence is WSAVYKRTYG. At 280–286 the chain is on the cytoplasmic side; the sequence is KDYKLKA. A beta stranded membrane pass occupies residues 287–296; the sequence is GYDSDVRLGW. At 297-316 the chain is on the chloroplast intermembrane side; that stretch reads ASLWVGDEAGKVKTTPMKMK. A beta stranded transmembrane segment spans residues 317–326; sequence VQFMLQVPQD. Residues 327 to 343 are Cytoplasmic-facing; it reads DIKSSVLMFRVKKRWDI.

It belongs to the plastid outer envelope porin OEP37 (TC 1.B.47) family. In terms of assembly, forms an hourglass-shaped multimeric complex. As to expression, ubiquitously expressed at low levels. Mostly present in cotyledons, and accumulates in seedlings and embryos.

The protein resides in the plastid. Its subcellular location is the chloroplast outer membrane. Voltage-dependent peptide-sensitive high conductance rectifying cation channel with a strong affinity for TIC32 that is imported into the chloroplast. Conductance is pH-dependent decreasing with decreasing pH values. In Arabidopsis thaliana (Mouse-ear cress), this protein is Outer envelope pore protein 37, chloroplastic (OEP37).